The following is a 174-amino-acid chain: Peptidyl-prolyl cis-trans isomerase-like 1 (174 aa).

The region spanning 5-159 (SPTYVTFDTS…EEIKIHRARL (155 aa)) is the PPIase cyclophilin-type domain.

This sequence belongs to the cyclophilin-type PPIase family. PPIL1 subfamily.

The catalysed reaction is [protein]-peptidylproline (omega=180) = [protein]-peptidylproline (omega=0). In terms of biological role, PPIases accelerate the folding of proteins. It catalyzes the cis-trans isomerization of proline imidic peptide bonds in oligopeptides. This Cryptococcus neoformans var. neoformans serotype D (strain B-3501A) (Filobasidiella neoformans) protein is Peptidyl-prolyl cis-trans isomerase-like 1 (CYP1).